The primary structure comprises 218 residues: Protein OPG170 (218 aa).

The N-terminal stretch at 1 to 16 (MYSLVFVILMCIPFSF) is a signal peptide. Asparagine 70 is a glycosylation site (N-linked (GlcNAc...) asparagine; by host).

It belongs to the orthopoxvirus OPG170 family.

It localises to the secreted. Its function is as follows. May interact with several cellular chemokines to interfere with chemokine-glycosaminoglycan (GAG) interactions at the cell surface to alter chemotaxis of nearby responsive cells. The polypeptide is Protein OPG170 (OPG170) (Homo sapiens (Human)).